The following is a 401-amino-acid chain: Homocysteine-responsive endoplasmic reticulum-resident ubiquitin-like domain member 2 protein (401 aa).

The 80-residue stretch at 10–89 folds into the Ubiquitin-like domain; the sequence is VTLIIKAPNQ…HMVHLVCASR (80 aa). A disordered region spans residues 87-137; it reads ASRSPPSSPKSSTDGESHGALASSTNSNSDHSDSTTPSPSQESLSLVAGSS. 2 stretches are compositionally biased toward low complexity: residues 88–98 and 109–126; these read SRSPPSSPKSS and SSTNSNSDHSDSTTPSPS. A helical membrane pass occupies residues 299–319; that stretch reads FIMVMGAMLLVYLHQAGWFPF.

It is found in the membrane. Could be involved in the unfolded protein response (UPR) pathway. This chain is Homocysteine-responsive endoplasmic reticulum-resident ubiquitin-like domain member 2 protein (Herpud2), found in Rattus norvegicus (Rat).